Consider the following 423-residue polypeptide: Serine--tRNA ligase (423 aa).

228–230 (TSE) contacts L-serine. Residue 259-261 (RLE) coordinates ATP. Glutamate 282 is a binding site for L-serine. 346-349 (EISS) provides a ligand contact to ATP. Serine 384 serves as a coordination point for L-serine.

Belongs to the class-II aminoacyl-tRNA synthetase family. Type-1 seryl-tRNA synthetase subfamily. Homodimer. The tRNA molecule binds across the dimer.

The protein resides in the cytoplasm. It carries out the reaction tRNA(Ser) + L-serine + ATP = L-seryl-tRNA(Ser) + AMP + diphosphate + H(+). The enzyme catalyses tRNA(Sec) + L-serine + ATP = L-seryl-tRNA(Sec) + AMP + diphosphate + H(+). Its pathway is aminoacyl-tRNA biosynthesis; selenocysteinyl-tRNA(Sec) biosynthesis; L-seryl-tRNA(Sec) from L-serine and tRNA(Sec): step 1/1. Functionally, catalyzes the attachment of serine to tRNA(Ser). Is also able to aminoacylate tRNA(Sec) with serine, to form the misacylated tRNA L-seryl-tRNA(Sec), which will be further converted into selenocysteinyl-tRNA(Sec). The chain is Serine--tRNA ligase from Ehrlichia canis (strain Jake).